The following is a 661-amino-acid chain: 3-hydroxypropionyl-coenzyme A synthetase (661 aa).

D526 is an active-site residue. Position 617 is an N6-acetyllysine (K617).

This sequence belongs to the ATP-dependent AMP-binding enzyme family. Homotetramer.

The catalysed reaction is 3-hydroxypropanoate + ATP + CoA = 3-hydroxypropanoyl-CoA + AMP + diphosphate. In terms of biological role, plays a role in the autotrophic CO(2) fixation pathway. Activates 3-hydroxypropionate to its CoA ester. Can also activate propionate, and to a lesser extent acrylate, acetate and butyrate. The polypeptide is 3-hydroxypropionyl-coenzyme A synthetase (Metallosphaera sedula (strain ATCC 51363 / DSM 5348 / JCM 9185 / NBRC 15509 / TH2)).